A 345-amino-acid chain; its full sequence is Protein arginine N-methyltransferase 1 (345 aa).

The region spanning alanine 24–arginine 345 is the SAM-dependent MTase PRMT-type domain. Residues histidine 37, arginine 46, glycine 70, glutamate 92, and glutamate 121 each contribute to the S-adenosyl-L-methionine site. Active-site residues include glutamate 136 and glutamate 145.

Belongs to the class I-like SAM-binding methyltransferase superfamily. Protein arginine N-methyltransferase family. In terms of processing, phosphorylated during flagellum resorption.

Its subcellular location is the nucleus. The protein localises to the cell projection. It is found in the cilium. The protein resides in the flagellum. It catalyses the reaction L-arginyl-[protein] + S-adenosyl-L-methionine = N(omega)-methyl-L-arginyl-[protein] + S-adenosyl-L-homocysteine + H(+). The enzyme catalyses L-arginyl-[protein] + 2 S-adenosyl-L-methionine = N(omega),N(omega)-dimethyl-L-arginyl-[protein] + 2 S-adenosyl-L-homocysteine + 2 H(+). Its function is as follows. Arginine methyltransferase that methylates (mono and asymmetric dimethylation) the guanidino nitrogens of arginyl residues present in target proteins. Mediates asymmetric dimethylation of components of the axoneme during flagellum resorption, such as CCDC40/FAP172, CCDC65/FAP250, RSP1, RSP2, RPS5, RSP6, and tektin. The polypeptide is Protein arginine N-methyltransferase 1 (PRMT1) (Chlamydomonas reinhardtii (Chlamydomonas smithii)).